The chain runs to 781 residues: Catenin beta-1 (781 aa).

Ala-2 is subject to N-acetylalanine. The interval Ala-2–Ser-23 is interaction with VCL. Position 23 is a phosphoserine; by GSK3-beta; alternate (Ser-23). Ser-23 is a glycosylation site (O-linked (GlcNAc) serine; alternate). Ser-29 carries the phosphoserine; by GSK3-beta modification. 2 positions are modified to phosphoserine; by GSK3-beta and HIPK2: Ser-33 and Ser-37. Residues Gly-34–Val-57 form a disordered region. Position 41 is a phosphothreonine; by GSK3-beta (Thr-41). Ser-45 is modified (phosphoserine). At Lys-49 the chain carries N6-acetyllysine. Residue Tyr-64 is modified to Phosphotyrosine; by PTK6. Tyr-142 is subject to Phosphotyrosine; by FYN and PTK6. ARM repeat units lie at residues Arg-151–Ser-191, Gln-193–Ser-234, Gly-235–Ala-276, Gly-277–Ser-318, Gly-319–Ala-360, Gly-361–Ser-389, Gly-400–Val-441, Gly-442–Ala-484, Tyr-489–Gln-530, Gly-531–Glu-571, Asn-594–Ala-636, and Thr-637–Lys-666. Residues Leu-156–Leu-178 are interaction with BCL9. Residue Ser-191 is modified to Phosphoserine. Ser-246 is modified (phosphoserine; by CDK5). 2 positions are modified to phosphotyrosine: Tyr-331 and Tyr-333. Ser-552 is subject to Phosphoserine. At Thr-556 the chain carries Phosphothreonine. At Cys-619 the chain carries S-nitrosocysteine. Phosphoserine is present on Ser-675. Residues His-720–Leu-781 form a disordered region. Positions Met-734–Gly-745 are enriched in basic and acidic residues. The tract at residues Asn-772–Leu-781 is interaction with SCRIB.

This sequence belongs to the beta-catenin family. Two separate complex-associated pools are found in the cytoplasm. The majority is present as component of an E-cadherin/ catenin adhesion complex composed of at least E-cadherin/CDH1 and beta-catenin/CTNNB1, and possibly alpha-catenin/CTNNA1; the complex is located to adherens junctions. The stable association of CTNNA1 is controversial as CTNNA1 was shown not to bind to F-actin when assembled in the complex. Alternatively, the CTNNA1-containing complex may be linked to F-actin by other proteins such as LIMA1. Another cytoplasmic pool is part of a large complex containing AXIN1, AXIN2, APC, CSNK1A1 and GSK3B that promotes phosphorylation on N-terminal Ser and Thr residues and ubiquitination of CTNNB1. Interacts directly with AXIN1; the interaction is regulated by CK2 via BTRC and its subsequent degradation by the proteasome. Interacts directly with AXIN1; the interaction is regulated by CDK2 phosphorylation. Wnt-dependent activation of DVL antagonizes the action of GSK3B. When GSK3B activity is inhibited the complex dissociates, CTNNB1 is dephosphorylated and is no longer targeted for destruction. The stabilized protein translocates to the nucleus, where it binds TCF/LEF-1 family members, BCL9, BCL9L and possibly also RUVBL1 and CHD8. Binds CTNNBIP and EP300. CTNNB1 forms a ternary complex with LEF1 and EP300 that is disrupted by CTNNBIP1 binding. Interacts with TAX1BP3 (via the PDZ domain); this interaction inhibits the transcriptional activity of CTNNB1. Interacts with AJAP1, BAIAP1, CARM1, CTNNA3, CXADR and PCDH11Y. Binds NHERF1. Interacts with GLIS2. Interacts with XIRP1. Interacts with PTPRU (via the cytoplasmic juxtamembrane domain) and with SLC30A9. Interacts with EMD. Interacts with SCRIB. Interacts with TNIK and TCF7L2. Interacts with SESTD1 and TRPC4. Interacts directly with AXIN1; the interaction is regulated by CDK2 phosphorylation of AXIN1. Interacts with CAV1. Interacts with TRPV4. The TRPV4 and CTNNB1 complex can interact with CDH1. Interacts with VCL. Interacts with PTPRJ. Interacts with PKT7. Interacts with NANOS1. Interacts with CDK2, NDRG2, NEK2 and CDK5. Found in a complex composed of MACF1, APC, AXIN1, CTNNB1 and GSK3B. Interacts with PTK6. Interacts with SOX7; this interaction may lead to proteasomal degradation of active CTNNB1 and thus inhibition of Wnt/beta-catenin-stimulated transcription. Identified in a complex with HINT1 and MITF. Interacts with FHIT. The CTNNB1 and TCF4 complex interacts with PML. Interacts with FERMT2. Identified in a complex with TCF4 and FERMT2. Interacts with RAPGEF2. Interacts with FAT1 (via the cytoplasmic domain). Interacts with RORA. May interact with P-cadherin/CDH3. Interacts with RNF220. Interacts with CTNND2. Interacts (via the C-terminal region) with CBY1. The complex composed, at least, of APC, CTNNB1 and GSK3B interacts with JPT1; the interaction requires the inactive form of GSK3B (phosphorylated at 'Ser-9'). Interacts with DLG5. Interacts with FAM53B; promoting translocation to the nucleus. Interacts with TMEM170B. Interacts with AHI1. Interacts with GID8. Component of an cadherin:catenin adhesion complex composed of at least of CDH26, beta-catenin/CTNNB1, alpha-catenin/CTNNA1 and p120 catenin/CTNND1. Forms a complex comprising APPL1, RUVBL2, APPL2, HDAC1 and HDAC2. Interacts with IRF2BPL; mediates the ubiquitination and degradation of CTNNB1. Interacts with AMFR. Interacts with LMBR1L. Interacts with SOX30; prevents interaction of CTNNB1 with TCF7L2/TCF4 and leads to inhibition of Wnt signaling. Interacts with SOX9; inhibiting CTNNB1 activity by competing with the binding sites of TCF/LEF within CTNNB1, thereby inhibiting the Wnt signaling. Interacts with SPN/CD43 cytoplasmic tail. Interacts (when phosphorylated at Tyr-333) with isoform M2 of PKM (PKM2); promoting transcription activation. Interacts with PKP2 (via HEAD domain). Interacts with CDH1. Interacts (when unphosphorylated) with FLYWCH1, perhaps preventing interaction of CTNNB1 with TCF4, and thereby regulating transcription activation; phosphorylation of CTNNB1 may inhibit the interaction. Interacts (via the central armadillo domains) with probable transcriptional regulator ADNP (via N-terminal region); interaction is direct and stabilizes CTNNB1 by modulating its phosphorylation by glycogen synthase kinase-3 beta GSK3B. Interacts with NR5A2. Interacts with DSG2; the interaction promotes localization of CTNNB1 at cell junctions thus reducing its nuclear localization and subsequent transcription of CTNNB1/TCF-target genes. Post-translationally, phosphorylation by GSK3B requires prior phosphorylation of Ser-45 by another kinase. Phosphorylation proceeds then from Thr-41 to Ser-33. Phosphorylated by NEK2. EGF stimulates tyrosine phosphorylation. Phosphorylated on Ser-33 and Ser-37 by HIPK2. This phosphorylation triggers proteasomal degradation. Phosphorylation at Ser-552 by AMPK promotes stabilization of the protein, enhancing TCF/LEF-mediated transcription. Phosphorylation on Ser-191 and Ser-246 by CDK5. Phosphorylation by CDK2 regulates insulin internalization. Phosphorylation by PTK6 at Tyr-64, Tyr-142, Tyr-331 and/or Tyr-333 with the predominant site at Tyr-64 is not essential for inhibition of transcriptional activity. Phosphorylation by SRC at Tyr-333 promotes interaction with isoform M2 of PKM (PKM2); promoting transcription activation. In terms of processing, ubiquitinated by the SCF(BTRC) E3 ligase complex when phosphorylated by GSK3B, leading to its degradation. Ubiquitinated by a E3 ubiquitin ligase complex containing UBE2D1, SIAH1, CACYBP/SIP, SKP1, APC and TBL1X, leading to its subsequent proteasomal degradation. Ubiquitinated and degraded following interaction with SOX9. Ubiquitinated via 'Lys-11'- and 'Lys-29'-linked ubiquitin chains by UBR5, leading to its stabilization. S-nitrosylation at Cys-619 within adherens junctions promotes VEGF-induced, NO-dependent endothelial cell permeability by disrupting interaction with E-cadherin, thus mediating disassembly adherens junctions. Post-translationally, O-glycosylation at Ser-23 decreases nuclear localization and transcriptional activity, and increases localization to the plasma membrane and interaction with E-cadherin CDH1. In terms of processing, deacetylated at Lys-49 by SIRT1. As to expression, expressed in the testis.

The protein localises to the cytoplasm. The protein resides in the nucleus. It localises to the cytoskeleton. Its subcellular location is the cell junction. It is found in the adherens junction. The protein localises to the cell membrane. The protein resides in the microtubule organizing center. It localises to the centrosome. Its subcellular location is the spindle pole. It is found in the synapse. The protein localises to the cilium basal body. Key downstream component of the canonical Wnt signaling pathway. In the absence of Wnt, forms a complex with AXIN1, AXIN2, APC, CSNK1A1 and GSK3B that promotes phosphorylation on N-terminal Ser and Thr residues and ubiquitination of CTNNB1 via BTRC and its subsequent degradation by the proteasome. In the presence of Wnt ligand, CTNNB1 is not ubiquitinated and accumulates in the nucleus, where it acts as a coactivator for transcription factors of the TCF/LEF family, leading to activate Wnt responsive genes. Also acts as a coactivator for other transcription factors, such as NR5A2. Promotes epithelial to mesenchymal transition/mesenchymal to epithelial transition (EMT/MET) via driving transcription of CTNNB1/TCF-target genes. Involved in the regulation of cell adhesion, as component of an E-cadherin:catenin adhesion complex. Acts as a negative regulator of centrosome cohesion. Involved in the CDK2/PTPN6/CTNNB1/CEACAM1 pathway of insulin internalization. Blocks anoikis of malignant kidney and intestinal epithelial cells and promotes their anchorage-independent growth by down-regulating DAPK2. Disrupts PML function and PML-NB formation by inhibiting RANBP2-mediated sumoylation of PML. Promotes neurogenesis by maintaining sympathetic neuroblasts within the cell cycle. Involved in chondrocyte differentiation via interaction with SOX9: SOX9-binding competes with the binding sites of TCF/LEF within CTNNB1, thereby inhibiting the Wnt signaling. Acts as a positive regulator of odontoblast differentiation during mesenchymal tooth germ formation, via promoting the transcription of differentiation factors such as LEF1, BMP2 and BMP4. Activity is repressed in a MSX1-mediated manner at the bell stage of mesenchymal tooth germ formation which prevents premature differentiation of odontoblasts. This chain is Catenin beta-1, found in Rattus norvegicus (Rat).